We begin with the raw amino-acid sequence, 408 residues long: Photox toxin (408 aa).

Residues 168-196 (NNQQHIKDSDGRKPVNNMPPPPPPPMADK) are disordered. Residues 184–193 (NMPPPPPPPM) show a composition bias toward pro residues. In terms of domain architecture, TR mART core spans 190–393 (PPPMADKTQK…LRLTDDASAD (204 aa)). Residues Arg-288, Ser-318, and Glu-355 contribute to the active site.

It in the C-terminal section; belongs to the SpvB family.

The catalysed reaction is L-arginyl-[protein] + NAD(+) = N(omega)-(ADP-D-ribosyl)-L-arginyl-[protein] + nicotinamide + H(+). Functionally, mono-ADP-ribosylates chicken skeletal alpha-actin and human non-skeletal beta- and gamma-actin. Mono-ADP-ribosylates 'Arg-177' of yeast actin, blocking its ability to polymerize. Does not possess NAD(+)-glycohydrolase activity, unlike most mART enzymes. Upon expression in S.cerevisiae almost completely inhibits growth. This Photorhabdus laumondii subsp. laumondii (strain DSM 15139 / CIP 105565 / TT01) (Photorhabdus luminescens subsp. laumondii) protein is Photox toxin (phxA).